The following is a 155-amino-acid chain: Ribosomal RNA large subunit methyltransferase H (155 aa).

2 residues coordinate S-adenosyl-L-methionine: leucine 72 and glycine 104.

Belongs to the RNA methyltransferase RlmH family. As to quaternary structure, homodimer.

The protein resides in the cytoplasm. The catalysed reaction is pseudouridine(1915) in 23S rRNA + S-adenosyl-L-methionine = N(3)-methylpseudouridine(1915) in 23S rRNA + S-adenosyl-L-homocysteine + H(+). In terms of biological role, specifically methylates the pseudouridine at position 1915 (m3Psi1915) in 23S rRNA. The chain is Ribosomal RNA large subunit methyltransferase H from Fusobacterium nucleatum subsp. nucleatum (strain ATCC 25586 / DSM 15643 / BCRC 10681 / CIP 101130 / JCM 8532 / KCTC 2640 / LMG 13131 / VPI 4355).